Consider the following 144-residue polypeptide: Ig heavy chain V region M167 (144 aa).

An N-terminal signal peptide occupies residues 1–19 (MKMWLNWVFLLTLLHGIQC). Positions 20 to 133 (EVKVVESGGG…GNSYFGYFDV (114 aa)) constitute an Ig-like domain.

The chain is Ig heavy chain V region M167 from Mus musculus (Mouse).